The primary structure comprises 573 residues: MKVLVTAAWPYVNSVPHLGNLIGSILSADVFARYARLRYGKENVLFVSGSDEHGTPIEIEAIKRKVNPKELTDQAHEYDRHLFLNVWKISFDNYTRTESEIHKKFVREFLLKLTKYIKVSEDEIPYCENDKLYLPDRFVKGTCPYCGFEDARGDQCDNCGKLLTPSLLVNPKCSICGKTPVFKKTKHWFFDLSEFNDKIRGWISSSNEMPDNVKSVALSWVGEGLKPRSITRDNKWGIPAPFEGAQDKSIYVWFEALLGYISAVIEYFERKGDQEKWKEYWFGPNIKSYYFIGKDNIPFHAVILPAMLMASEEEYHLPDVIAATEYLLYEGQKFSKSRKIGVWIDEAPELMDVEYWRFVLIRLRPEEKDTNFTWRETVRIVNTELNDDIGNYVNRVLSMVNRYYSGIVPEFKIDILDDNDRKIISLINETPKVVGDLFEKGKLKAGTEEMLKFVRECNAYLNMKAPWDLYKSGKEIELKNTLYIGTNSVKTIAILLYPLMPSHAQKIYEMLNMGNIENEKWDVASTLSVNPGHKIGKVNVLFKKLEPEFESKIKDKLEKIRKDIEKIRPTLLK.

The 'HIGH' region signature appears at 10–20 (PYVNSVPHLGN). Zn(2+)-binding residues include C143, C146, C156, and C159. Residues 333–337 (KFSKS) carry the 'KMSKS' region motif. Position 336 (K336) interacts with ATP.

Belongs to the class-I aminoacyl-tRNA synthetase family. MetG type 1 subfamily. Requires Zn(2+) as cofactor.

Its subcellular location is the cytoplasm. The catalysed reaction is tRNA(Met) + L-methionine + ATP = L-methionyl-tRNA(Met) + AMP + diphosphate. Functionally, is required not only for elongation of protein synthesis but also for the initiation of all mRNA translation through initiator tRNA(fMet) aminoacylation. This chain is Methionine--tRNA ligase, found in Saccharolobus solfataricus (strain ATCC 35092 / DSM 1617 / JCM 11322 / P2) (Sulfolobus solfataricus).